A 42-amino-acid chain; its full sequence is Protein YkgS (42 aa).

The polypeptide is Protein YkgS (ykgS) (Escherichia coli (strain K12)).